A 188-amino-acid polypeptide reads, in one-letter code: Large ribosomal subunit protein bL32m (188 aa).

Cys-110, Cys-113, Cys-123, and Cys-126 together coordinate Zn(2+). Positions 162–188 (GETPSEHDQGKRIIERERKRPSWFTQN) are disordered. Basic and acidic residues predominate over residues 165–181 (PSEHDQGKRIIERERKR).

The protein belongs to the bacterial ribosomal protein bL32 family. As to quaternary structure, component of the mitochondrial ribosome large subunit (39S) which comprises a 16S rRNA and about 50 distinct proteins. Post-translationally, MRPL32 precursor is processed by the m-AAA protease (composed of AFG3L2 and SPG7), which cleaves the N-terminal transit peptide. Cleavage by the m-AAA protease takes place prior to assembly into the large subunit, an essential step for mitochondrial ribosome (mitoribosome) assembly. Proper processing by the m-AAA protease is dependent on the zinc-binding region within the tightly folded C-terminal domain of MRPL32: zinc-dependent folding halts degradation initiated from the N-terminus and triggers the release of mature MRPL32.

It localises to the mitochondrion. In terms of biological role, component of the mitochondrial large ribosomal subunit (mt-LSU). The mitochondrial ribosome (mitoribosome) is a large ribonucleoprotein complex responsible for the synthesis of proteins inside mitochondria. The polypeptide is Large ribosomal subunit protein bL32m (MRPL32) (Bos taurus (Bovine)).